A 487-amino-acid chain; its full sequence is MNTFPLFFKLTNQPVLIVGGGEVAQRKADLLSRAGACITILAPQISQEIHQLLSDERHTLITAHYDKKYIDGKRIVIAGTDDEALNHQVHADCKALNIPVNVVDTPPLCDFIFPAIVDRNPIVIGISSNGKAPVLARLTRARLETLIPQGYGKLAKLAGDMRDEVKSKIPTLTGRRQFWEKAFEGKVSELMFAGRSVEAEQALKQQLEQTHQQLSSNSDVKQADPKSVGEVYIVGAGPGDPELLTFKALRLMQQADIVYYDALVSREVLDLCRRDADKVFVGKKRSNHAVAQQGINQLMIDAASSGKRVVRLKGGDPFVFGRGGEEIQALRAAGIAYQVVPGITAAGAASCYTGIPLTHRDYAQSVRFVTGFLKSGEPNTGFAALTNPNETVIFYMGLHSLERLTKGLMDAGRSPQTPIAIISQASMPTQQVMTGTLADIVAKHEANPLPTPALLIVGEVAKLHDELAWYGEHIVNTDQQAHALNML.

The segment at 1 to 203 is precorrin-2 dehydrogenase /sirohydrochlorin ferrochelatase; the sequence is MNTFPLFFKL…GRSVEAEQAL (203 aa). NAD(+) contacts are provided by residues 22–23 and 43–44; these read EV and PQ. The residue at position 128 (serine 128) is a Phosphoserine. The interval 229–487 is uroporphyrinogen-III C-methyltransferase; that stretch reads GEVYIVGAGP…DQQAHALNML (259 aa). Residue proline 238 coordinates S-adenosyl-L-methionine. The active-site Proton acceptor is the aspartate 261. The Proton donor role is filled by lysine 283. Residues 314 to 316, valine 319, 344 to 345, methionine 396, and alanine 425 each bind S-adenosyl-L-methionine; these read GGD and TA.

This sequence in the N-terminal section; belongs to the precorrin-2 dehydrogenase / sirohydrochlorin ferrochelatase family. The protein in the C-terminal section; belongs to the precorrin methyltransferase family.

It carries out the reaction uroporphyrinogen III + 2 S-adenosyl-L-methionine = precorrin-2 + 2 S-adenosyl-L-homocysteine + H(+). The catalysed reaction is precorrin-2 + NAD(+) = sirohydrochlorin + NADH + 2 H(+). It catalyses the reaction siroheme + 2 H(+) = sirohydrochlorin + Fe(2+). The protein operates within cofactor biosynthesis; adenosylcobalamin biosynthesis; precorrin-2 from uroporphyrinogen III: step 1/1. It functions in the pathway cofactor biosynthesis; adenosylcobalamin biosynthesis; sirohydrochlorin from precorrin-2: step 1/1. Its pathway is porphyrin-containing compound metabolism; siroheme biosynthesis; precorrin-2 from uroporphyrinogen III: step 1/1. It participates in porphyrin-containing compound metabolism; siroheme biosynthesis; siroheme from sirohydrochlorin: step 1/1. The protein operates within porphyrin-containing compound metabolism; siroheme biosynthesis; sirohydrochlorin from precorrin-2: step 1/1. Functionally, multifunctional enzyme that catalyzes the SAM-dependent methylations of uroporphyrinogen III at position C-2 and C-7 to form precorrin-2 via precorrin-1. Then it catalyzes the NAD-dependent ring dehydrogenation of precorrin-2 to yield sirohydrochlorin. Finally, it catalyzes the ferrochelation of sirohydrochlorin to yield siroheme. The sequence is that of Siroheme synthase from Psychrobacter sp. (strain PRwf-1).